The primary structure comprises 214 residues: Alpha-S1-casein (214 aa).

Positions 1–15 are cleaved as a signal peptide; that stretch reads MKLLILTCLVAVALA. A disordered region spans residues 59–91; sequence IGSESTEDQAMEDAKQMKAGSSSSSEEIVPNSA. Phosphoserine occurs at positions 61, 63, 79, 80, 81, 82, 83, 90, and 130.

Belongs to the alpha-casein family. In terms of tissue distribution, mammary gland specific. Secreted in milk.

It localises to the secreted. In terms of biological role, important role in the capacity of milk to transport calcium phosphate. The protein is Alpha-S1-casein (CSN1S1) of Capra hircus (Goat).